We begin with the raw amino-acid sequence, 276 residues long: Pyridinium-3,5-bisthiocarboxylic acid mononucleotide synthase (276 aa).

Catalysis depends on Cys176, which acts as the Nucleophile and sulfur donor. Cys176 is modified (2,3-didehydroalanine (Cys)).

This sequence belongs to the LarE family.

The enzyme catalyses pyridinium-3,5-dicarboxylate mononucleotide + [LarE protein]-L-cysteine + ATP = [LarE protein]-dehydroalanine + pyridinium-3-carboxylate-5-thiocarboxylate mononucleotide + AMP + diphosphate + H(+). It catalyses the reaction [LarE protein]-L-cysteine + pyridinium-3-carboxylate-5-thiocarboxylate mononucleotide + ATP = pyridinium-3,5-bisthiocarboxylate mononucleotide + [LarE protein]-dehydroalanine + AMP + diphosphate + H(+). Involved in the biosynthesis of a nickel-pincer cofactor ((SCS)Ni(II) pincer complex). Catalyzes the ATP-dependent incorporation of two sulfur atoms in pyridinium-3,5-biscarboxylic acid mononucleotide (P2CMN) to yield pyridinium-3,5-bisthiocarboxylic acid mononucleotide (P2TMN). The source of sulfur is the enzyme itself: Cys-176 of LarE is the sulfur donor, thereby being converted into dehydroalanine, and is not regenerated in vivo. Thus, two molecules of LarE undergo sacrificial sulfur transfer to create one P2TMN. Binds nickel. Is required for the activation of the lactate racemase LarA. May also be involved in the activation of other nickel-pincer cofactor-dependent enzymes. The polypeptide is Pyridinium-3,5-bisthiocarboxylic acid mononucleotide synthase (Lactiplantibacillus plantarum (strain ATCC BAA-793 / NCIMB 8826 / WCFS1) (Lactobacillus plantarum)).